Here is a 383-residue protein sequence, read N- to C-terminus: DNA dC-&gt;dU-editing enzyme APOBEC-3G (383 aa).

Residues 1–60 (MKPHFRNTVERMYRGTFFYNFNNRPILSRRNTVWLCYEVKTRGPSMPTWGAKIFRGQLYP) are essential for cytoplasmic localization. 2 consecutive CMP/dCMP-type deaminase domains span residues 29 to 138 (RRNT…LRIL) and 214 to 327 (GQRE…LRTL). T32 carries the post-translational modification Phosphothreonine; by PKA. Zn(2+) contacts are provided by H65, C97, and C100. The tract at residues 209 to 335 (KPWVSGQRET…TLHRDGAKIA (127 aa)) is necessary for homooligomerization. The interval 213-215 (SGQ) is interaction with DNA. T218 is subject to Phosphothreonine; by PKA and CAMK2. Zn(2+) is bound at residue H257. E259 serves as the catalytic Proton donor. C287 and C290 together coordinate Zn(2+). Positions 312-319 (RIYDDQGR) are interaction with DNA.

The protein belongs to the cytidine and deoxycytidylate deaminase family. In terms of assembly, homodimer. Homooligomer. Can bind RNA to form ribonucleoprotein complexes of high-molecular-mass (HMM) or low-molecular-mass (LMM). HMM is inactive and heterogeneous in protein composition because of binding nonselectively to cellular RNAs, which in turn are associated with variety of cellular proteins. The LMM form which is enzymatically active has few or no RNAs associated. Its ability to form homooligomer is distinct from its ability to assemble into HMM. Interacts with APOBEC3B, APOBEC3F, MOV10, AGO2, EIF4E, EIF4ENIF1, DCP2 and DDX6 in an RNA-dependent manner. Interacts with AGO1, AGO3 and PKA/PRKACA. It depends on Zn(2+) as a cofactor.

The protein localises to the cytoplasm. Its subcellular location is the nucleus. It is found in the P-body. It catalyses the reaction a 2'-deoxycytidine in single-stranded DNA + H2O + H(+) = a 2'-deoxyuridine in single-stranded DNA + NH4(+). In terms of biological role, DNA deaminase (cytidine deaminase) which acts as an inhibitor of retrovirus replication and retrotransposon mobility. After the penetration of retroviral nucleocapsids into target cells of infection and the initiation of reverse transcription, it can induce the conversion of cytosine to uracil in the minus-sense single-strand viral DNA, leading to G-to-A hypermutations in the subsequent plus-strand viral DNA. The resultant detrimental levels of mutations in the proviral genome, along with a deamination-independent mechanism that works prior to the proviral integration, together exert efficient antiretroviral effects in infected target cells. Selectively targets single-stranded DNA and does not deaminate double-stranded DNA or single- or double-stranded RNA. The sequence is that of DNA dC-&gt;dU-editing enzyme APOBEC-3G (APOBEC3G) from Erythrocebus patas (Red guenon).